The primary structure comprises 155 residues: Small ribosomal subunit protein uS7c (155 aa).

Belongs to the universal ribosomal protein uS7 family. In terms of assembly, part of the 30S ribosomal subunit.

It is found in the plastid. It localises to the chloroplast. In terms of biological role, one of the primary rRNA binding proteins, it binds directly to 16S rRNA where it nucleates assembly of the head domain of the 30S subunit. This Chaetosphaeridium globosum (Charophycean green alga) protein is Small ribosomal subunit protein uS7c (rps7).